The chain runs to 83 residues: Large ribosomal subunit protein bL27 (83 aa).

Residues 1 to 25 (MAHKKGQGASRNGRDSESKRLGLKV) are disordered.

The protein belongs to the bacterial ribosomal protein bL27 family.

The chain is Large ribosomal subunit protein bL27 from Chlamydia trachomatis serovar L2 (strain ATCC VR-902B / DSM 19102 / 434/Bu).